A 261-amino-acid polypeptide reads, in one-letter code: Short-chain-enoyl-CoA hydratase (261 aa).

E114 (nucleophile) is an active-site residue. Catalysis depends on E134, which acts as the Proton acceptor.

Belongs to the enoyl-CoA hydratase/isomerase family. In terms of assembly, homotetramer.

It carries out the reaction a short-chain (3S)-3-hydroxyacyl-CoA = a short-chain (2E)-enoyl-CoA + H2O. The protein operates within lipid metabolism; butanoate metabolism. Functionally, catalyzes the reversible hydration of crotonyl-CoA. Can also use hexenoyl-CoA but not higher analogs. In Clostridium acetobutylicum (strain ATCC 824 / DSM 792 / JCM 1419 / IAM 19013 / LMG 5710 / NBRC 13948 / NRRL B-527 / VKM B-1787 / 2291 / W), this protein is Short-chain-enoyl-CoA hydratase (crt).